A 575-amino-acid polypeptide reads, in one-letter code: Dihydroxy-acid dehydratase (575 aa).

Residues 1 to 25 (MPTTDSARAADIKQPDIKPRSRDVT) form a disordered region. A compositionally biased stretch (basic and acidic residues) spans 8-25 (RAADIKQPDIKPRSRDVT). Cysteine 64 serves as a coordination point for [2Fe-2S] cluster. Aspartate 96 contributes to the Mg(2+) binding site. Cysteine 137 contacts [2Fe-2S] cluster. The Mg(2+) site is built by aspartate 138 and lysine 139. Residue lysine 139 is modified to N6-carboxylysine. Position 214 (cysteine 214) interacts with [2Fe-2S] cluster. Residue glutamate 465 coordinates Mg(2+). Residue serine 491 is the Proton acceptor of the active site.

The protein belongs to the IlvD/Edd family. In terms of assembly, homodimer. [2Fe-2S] cluster is required as a cofactor. It depends on Mg(2+) as a cofactor.

The enzyme catalyses (2R)-2,3-dihydroxy-3-methylbutanoate = 3-methyl-2-oxobutanoate + H2O. The catalysed reaction is (2R,3R)-2,3-dihydroxy-3-methylpentanoate = (S)-3-methyl-2-oxopentanoate + H2O. Its pathway is amino-acid biosynthesis; L-isoleucine biosynthesis; L-isoleucine from 2-oxobutanoate: step 3/4. It functions in the pathway amino-acid biosynthesis; L-valine biosynthesis; L-valine from pyruvate: step 3/4. Functions in the biosynthesis of branched-chain amino acids. Catalyzes the dehydration of (2R,3R)-2,3-dihydroxy-3-methylpentanoate (2,3-dihydroxy-3-methylvalerate) into 2-oxo-3-methylpentanoate (2-oxo-3-methylvalerate) and of (2R)-2,3-dihydroxy-3-methylbutanoate (2,3-dihydroxyisovalerate) into 2-oxo-3-methylbutanoate (2-oxoisovalerate), the penultimate precursor to L-isoleucine and L-valine, respectively. This Mycolicibacterium paratuberculosis (strain ATCC BAA-968 / K-10) (Mycobacterium paratuberculosis) protein is Dihydroxy-acid dehydratase.